The primary structure comprises 162 residues: 2-C-methyl-D-erythritol 2,4-cyclodiphosphate synthase (162 aa).

A divalent metal cation is bound by residues D9 and H11. Residues 9 to 11 (DVH) and 35 to 36 (HS) each bind 4-CDP-2-C-methyl-D-erythritol 2-phosphate. H43 contributes to the a divalent metal cation binding site. 4-CDP-2-C-methyl-D-erythritol 2-phosphate contacts are provided by residues 57 to 59 (DIG), 62 to 66 (FPDTD), 133 to 136 (TTTE), F140, and R143.

This sequence belongs to the IspF family. Homotrimer. Requires a divalent metal cation as cofactor.

It carries out the reaction 4-CDP-2-C-methyl-D-erythritol 2-phosphate = 2-C-methyl-D-erythritol 2,4-cyclic diphosphate + CMP. It functions in the pathway isoprenoid biosynthesis; isopentenyl diphosphate biosynthesis via DXP pathway; isopentenyl diphosphate from 1-deoxy-D-xylulose 5-phosphate: step 4/6. In terms of biological role, involved in the biosynthesis of isopentenyl diphosphate (IPP) and dimethylallyl diphosphate (DMAPP), two major building blocks of isoprenoid compounds. Catalyzes the conversion of 4-diphosphocytidyl-2-C-methyl-D-erythritol 2-phosphate (CDP-ME2P) to 2-C-methyl-D-erythritol 2,4-cyclodiphosphate (ME-CPP) with a corresponding release of cytidine 5-monophosphate (CMP). The chain is 2-C-methyl-D-erythritol 2,4-cyclodiphosphate synthase from Histophilus somni (strain 129Pt) (Haemophilus somnus).